A 456-amino-acid polypeptide reads, in one-letter code: NADH-quinone oxidoreductase subunit N (456 aa).

The next 14 membrane-spanning stretches (helical) occupy residues Leu6–Ala26, Val45–Phe65, Thr75–Ala95, Glu97–His117, Ala118–Phe138, Phe151–Ala171, Trp181–Phe201, Pro220–Leu240, Leu252–Ala272, Met281–Ala301, Val308–Met328, Gly355–Phe375, Glu382–Ile402, and Leu426–Ile446.

It belongs to the complex I subunit 2 family. In terms of assembly, NDH-1 is composed of 14 different subunits. Subunits NuoA, H, J, K, L, M, N constitute the membrane sector of the complex.

Its subcellular location is the cell inner membrane. The catalysed reaction is a quinone + NADH + 5 H(+)(in) = a quinol + NAD(+) + 4 H(+)(out). NDH-1 shuttles electrons from NADH, via FMN and iron-sulfur (Fe-S) centers, to quinones in the respiratory chain. The immediate electron acceptor for the enzyme in this species is believed to be ubiquinone. Couples the redox reaction to proton translocation (for every two electrons transferred, four hydrogen ions are translocated across the cytoplasmic membrane), and thus conserves the redox energy in a proton gradient. This Rhodopseudomonas palustris (strain BisA53) protein is NADH-quinone oxidoreductase subunit N.